The sequence spans 261 residues: Carnitinyl-CoA dehydratase (261 aa).

Residue E111 is the Nucleophile of the active site. The active-site Proton acceptor is the E131.

The protein belongs to the enoyl-CoA hydratase/isomerase family.

It catalyses the reaction (R)-carnitinyl-CoA = crotonobetainyl-CoA + H2O. It participates in amine and polyamine metabolism; carnitine metabolism. In terms of biological role, catalyzes the reversible dehydration of L-carnitinyl-CoA to crotonobetainyl-CoA. The polypeptide is Carnitinyl-CoA dehydratase (Shigella flexneri).